A 170-amino-acid chain; its full sequence is ATP synthase subunit b (170 aa).

Residues 11-31 form a helical membrane-spanning segment; sequence GLNTGDIIFQLIAMLILLALL.

Belongs to the ATPase B chain family. In terms of assembly, F-type ATPases have 2 components, F(1) - the catalytic core - and F(0) - the membrane proton channel. F(1) has five subunits: alpha(3), beta(3), gamma(1), delta(1), epsilon(1). F(0) has three main subunits: a(1), b(2) and c(10-14). The alpha and beta chains form an alternating ring which encloses part of the gamma chain. F(1) is attached to F(0) by a central stalk formed by the gamma and epsilon chains, while a peripheral stalk is formed by the delta and b chains.

It localises to the cell membrane. F(1)F(0) ATP synthase produces ATP from ADP in the presence of a proton or sodium gradient. F-type ATPases consist of two structural domains, F(1) containing the extramembraneous catalytic core and F(0) containing the membrane proton channel, linked together by a central stalk and a peripheral stalk. During catalysis, ATP synthesis in the catalytic domain of F(1) is coupled via a rotary mechanism of the central stalk subunits to proton translocation. In terms of biological role, component of the F(0) channel, it forms part of the peripheral stalk, linking F(1) to F(0). The chain is ATP synthase subunit b from Bacillus pumilus (strain SAFR-032).